Here is a 337-residue protein sequence, read N- to C-terminus: Cytoskeleton protein RodZ (337 aa).

The Cytoplasmic segment spans residues 1-111 (MNTEATHDQN…LGKRRKKRDG (111 aa)). In terms of domain architecture, HTH cro/C1-type spans 19–71 (LRNAREQLGLSQQAVAERLCLKVSTVRDIEEDKAPADLASTFLRGYIRSYARL). A DNA-binding region (H-T-H motif) is located at residues 30-49 (QQAVAERLCLKVSTVRDIEE). Residues 112 to 132 (WLMTFTWLVLFVVIGLSGAWW) form a helical; Signal-anchor for type II membrane protein membrane-spanning segment. The Periplasmic segment spans residues 133-337 (WQDHKAQQEE…TLNAEQSPAQ (205 aa)). Residues 145 to 167 (TMADQSSAELSSNSEQGQSVPLN) are compositionally biased toward polar residues. The interval 145-236 (TMADQSSAEL…TAATTPDGAA (92 aa)) is disordered. A compositionally biased stretch (low complexity) spans 168 to 207 (TSTTTDPATTSTPPASVDTTATNTQTPVVTAPAPAVDPQQ). Over residues 208 to 218 (NAVVSPSQANV) the composition is skewed to polar residues. The segment covering 219–236 (DTAATPAPTAATTPDGAA) has biased composition (low complexity).

This sequence belongs to the RodZ family.

The protein resides in the cell inner membrane. Cytoskeletal protein that is involved in cell-shape control through regulation of the length of the long axis. This chain is Cytoskeleton protein RodZ, found in Escherichia coli O157:H7.